Here is a 94-residue protein sequence, read N- to C-terminus: DASH complex subunit dad2 (94 aa).

Residues 18 to 38 (KLRDSSNDMVQQIETLAAKLE) are a coiled coil. The tract at residues 72–94 (VRIPPSTSNTNASATEQGDVEEV) is disordered. A compositionally biased stretch (polar residues) spans 76–87 (PSTSNTNASATE).

Belongs to the DASH complex DAD2 family. Component of the DASH complex consisting of ask1, dad1, dad2, dad3, dad4, dam1, duo1, dad5, spc19 and spc34, with a stoichiometry of one copy of each subunit per complex. Multiple DASH complexes oligomerize to form a ring that encircles spindle microtubules and organizes the rod-like NDC80 complexes of the outer kinetochore. DASH complex oligomerization strengthens microtubule attachments. On cytoplasmic microtubules, DASH complexes appear to form patches instead of rings.

The protein resides in the nucleus. It localises to the cytoplasm. Its subcellular location is the cytoskeleton. The protein localises to the spindle. It is found in the chromosome. The protein resides in the centromere. It localises to the kinetochore. In terms of biological role, component of the DASH complex that connects microtubules with kinetochores and couples microtubule depolymerisation to chromosome movement; it is involved in retrieving kinetochores to the spindle poles before their re-orientation on the spindle in early mitosis and allows microtubule depolymerization to pull chromosomes apart and resist detachment during anaphase. Kinetochores, consisting of a centromere-associated inner segment and a microtubule-contacting outer segment, play a crucial role in chromosome segregation by mediating the physical connection between centromeric DNA and microtubules. Kinetochores also serve as an input point for the spindle assembly checkpoint, which delays anaphase until all chromosomes have bioriented on the mitotic spindle. The DASH complex mediates bipolar kinetochore-microtubule attachments and facilitates the formation of additional interactions between outer kinetochore components and spindle microtubules. During chromosome movement along the microtubule, it is required both for the sliding of kinetochores along the lateral side of the microtubule and also for microtubule end-on pulling on the kinetochore. Modulates cytoplasmic microtubule dynamics by tracking the plus-end of shortening microtubules and slowing their depolymerization. The sequence is that of DASH complex subunit dad2 from Schizosaccharomyces pombe (strain 972 / ATCC 24843) (Fission yeast).